We begin with the raw amino-acid sequence, 660 residues long: Arginine--tRNA ligase, cytoplasmic (660 aa).

The tract at residues 1 to 72 (MELPVCFYEE…LEEKKKSSKS (72 aa)) is could be involved in the assembly of the multisynthetase complex. L-arginine-binding positions include 200–202 (SPN), histidine 211, tyrosine 384, aspartate 388, and glutamine 412. The 'HIGH' region signature appears at 201–212 (PNIAKEMHVGHL). Residues 529–543 (NTAAYLLYAYTRIRS) are interaction with tRNA.

This sequence belongs to the class-I aminoacyl-tRNA synthetase family. In terms of assembly, monomer; also part of a multisubunit complex that groups tRNA ligases for Arg, Asp, Glu, Gln, Ile, Leu, Lys, Met and Pro.

It localises to the cytoplasm. Its subcellular location is the cytosol. The enzyme catalyses tRNA(Arg) + L-arginine + ATP = L-arginyl-tRNA(Arg) + AMP + diphosphate. Functionally, forms part of a macromolecular complex that catalyzes the attachment of specific amino acids to cognate tRNAs during protein synthesis. This is Arginine--tRNA ligase, cytoplasmic (rars1) from Xenopus tropicalis (Western clawed frog).